Reading from the N-terminus, the 415-residue chain is Fructose-like permease IIC component 1 (415 aa).

The Cytoplasmic segment spans residues 1–46 (MAIKKRSATVVPGASGAAAAVKNPQASKTSFWGELPQHVMSGISRM). Residues 35–410 (LPQHVMSGIS…RLMMFRKGKL (376 aa)) form the PTS EIIC type-2 domain. A helical membrane pass occupies residues 47–67 (VPTLIMGGVILAFSQLIAYSW). Over 68 to 101 (LKIPAEIGIMDALNSGKFSGFDLSLLKFAWLSQS) the chain is Periplasmic. The chain crosses the membrane as a helical span at residues 102–122 (FGGVLFGFAIPMFAAFVANSI). Over 123–126 (GGKL) the chain is Cytoplasmic. Residues 127–147 (AFPAGFIGGLMSTQPTQLLNF) traverse the membrane as a helical segment. Residues 148 to 157 (DPSTMQWATS) lie on the Periplasmic side of the membrane. Residues 158–178 (SPVPSTFIGALIISIVAGYLV) form a helical membrane-spanning segment. Topologically, residues 179-197 (KWMNQKIQLPDFLLAFKTT) are cytoplasmic. The helical transmembrane segment at 198-218 (FLLPILSAIFVMLAMYYVITP) threads the bilayer. The Periplasmic segment spans residues 219-237 (FGGWINGGIRTVLTAAGEK). The helical transmembrane segment at 238–258 (GALMYAMGIAAATAIDLGGPI) threads the bilayer. Over 259 to 276 (NKAAGFVAFSFTTDHVLP) the chain is Cytoplasmic. The chain crosses the membrane as a helical span at residues 277-297 (VTARSIAIVIPPIGLGLATII). Residues 298–318 (DRRLTGKRLFNAQLYPQGKTA) lie on the Periplasmic side of the membrane. Residues 319-339 (MFLAFMGISEGAIPFALESPI) form a helical membrane-spanning segment. Over 340 to 341 (TA) the chain is Cytoplasmic. Residues 342–362 (IPSYMVGAIVGSTAAVWLGAV) traverse the membrane as a helical segment. At 363-378 (QWFPESAIWAWPLVTN) the chain is on the periplasmic side. A helical transmembrane segment spans residues 379–399 (LGVYMAGIALGAVITALMVVF). Over 400–415 (LRLMMFRKGKLLIDSL) the chain is Cytoplasmic.

Its subcellular location is the cell inner membrane. Its function is as follows. The phosphoenolpyruvate-dependent sugar phosphotransferase system (PTS), a major carbohydrate active -transport system, catalyzes the phosphorylation of incoming sugar substrates concomitant with their translocation across the cell membrane. The polypeptide is Fructose-like permease IIC component 1 (fryC) (Escherichia coli (strain K12)).